Reading from the N-terminus, the 230-residue chain is Large ribosomal subunit protein uL1 (230 aa).

It belongs to the universal ribosomal protein uL1 family. Part of the 50S ribosomal subunit.

Binds directly to 23S rRNA. The L1 stalk is quite mobile in the ribosome, and is involved in E site tRNA release. In terms of biological role, protein L1 is also a translational repressor protein, it controls the translation of the L11 operon by binding to its mRNA. This Leuconostoc citreum (strain KM20) protein is Large ribosomal subunit protein uL1.